Here is an 855-residue protein sequence, read N- to C-terminus: DNA mismatch repair protein MutS (855 aa).

616 to 623 (GPNMGGKS) provides a ligand contact to ATP.

It belongs to the DNA mismatch repair MutS family.

Its function is as follows. This protein is involved in the repair of mismatches in DNA. It is possible that it carries out the mismatch recognition step. This protein has a weak ATPase activity. The polypeptide is DNA mismatch repair protein MutS (Salmonella dublin (strain CT_02021853)).